We begin with the raw amino-acid sequence, 132 residues long: Cytidine deaminase (132 aa).

Positions 1-128 constitute a CMP/dCMP-type deaminase domain; the sequence is MDRQMLIKEA…ELLPGAFTAE (128 aa). Position 42–44 (42–44) interacts with substrate; it reads NIE. Cysteine 53 contributes to the Zn(2+) binding site. The active-site Proton donor is glutamate 55. Zn(2+)-binding residues include cysteine 86 and cysteine 89.

The protein belongs to the cytidine and deoxycytidylate deaminase family. Requires Zn(2+) as cofactor.

It catalyses the reaction cytidine + H2O + H(+) = uridine + NH4(+). It carries out the reaction 2'-deoxycytidine + H2O + H(+) = 2'-deoxyuridine + NH4(+). Its function is as follows. This enzyme scavenges exogenous and endogenous cytidine and 2'-deoxycytidine for UMP synthesis. The chain is Cytidine deaminase (cdd) from Halalkalibacterium halodurans (strain ATCC BAA-125 / DSM 18197 / FERM 7344 / JCM 9153 / C-125) (Bacillus halodurans).